A 323-amino-acid chain; its full sequence is Sphingolipid delta(4)-desaturase/C4-monooxygenase DES2 (323 aa).

Residue G2 is the site of N-myristoyl glycine attachment. 2 helical membrane passes run 45–65 and 68–88; these read WAVL…RGLA and WLLF…TLAI. Residues 89–93 carry the Histidine box-1 motif; sequence HDISH. Residues 95–99 form a required for C4-hydroxylase activity region; sequence AAFGT. A Histidine box-2 motif is present at residues 128–132; that stretch reads HVDHH. The chain crosses the membrane as a helical span at residues 210 to 231; that stretch reads VYLLASSFLGLGLHPISGHFVA. The Histidine box-3 signature appears at 259 to 263; sequence HVEHH.

Belongs to the fatty acid desaturase type 1 family. DEGS subfamily. As to expression, highly expressed in skin, intestine and kidney.

It localises to the endoplasmic reticulum membrane. The catalysed reaction is a dihydroceramide + 2 Fe(II)-[cytochrome b5] + O2 + 2 H(+) = a phytoceramide + 2 Fe(III)-[cytochrome b5] + H2O. It catalyses the reaction an N-acylsphinganine + 2 Fe(II)-[cytochrome b5] + O2 + 2 H(+) = an N-acylsphing-4-enine + 2 Fe(III)-[cytochrome b5] + 2 H2O. The enzyme catalyses N-octanoylsphinganine + 2 Fe(II)-[cytochrome b5] + O2 + 2 H(+) = N-octanoyl-4-hydroxysphinganine + 2 Fe(III)-[cytochrome b5] + H2O. It carries out the reaction an N-acylsphinganine + 2 Fe(II)-[cytochrome b5] + O2 + 2 H(+) = an N-acyl-(4R)-4-hydroxysphinganine + 2 Fe(III)-[cytochrome b5] + H2O. It participates in membrane lipid metabolism; sphingolipid biosynthesis. Bifunctional enzyme which acts both as a sphingolipid delta(4)-desaturase and a sphingolipid C4-monooxygenase. In Homo sapiens (Human), this protein is Sphingolipid delta(4)-desaturase/C4-monooxygenase DES2.